Here is a 651-residue protein sequence, read N- to C-terminus: Peptide-N(4)-(N-acetyl-beta-glucosaminyl)asparagine amidase (651 aa).

Residue Ala2 is modified to N-acetylalanine. The PUB domain maps to 30-91; the sequence is EASKLLLTYA…EGETHLIFPK (62 aa). Residues 116–153 are disordered; sequence SSQKVEFSQHPAAVRLPAEQPEDPTGLMQHSGNQPGQP. Over residues 143–152 the composition is skewed to polar residues; it reads MQHSGNQPGQ. Cys247, Cys250, Cys280, and Cys283 together coordinate Zn(2+). Cys306 acts as the Nucleophile in catalysis. Catalysis depends on residues His333 and Asp350. The 201-residue stretch at 451–651 folds into the PAW domain; it reads ELGGRVSGSL…LEIIITFSDL (201 aa).

This sequence belongs to the transglutaminase-like superfamily. PNGase family. In terms of assembly, component of a complex required to couple retrotranslocation, ubiquitination and deglycosylation composed of NGLY1, SAKS1, AMFR, VCP and RAD23B. Interacts with the proteasome components RAD23B and PSMC1. Interacts with directly with VCP. Interacts with DERL1, bringing it close to the endoplasmic reticulum membrane. Interacts with SAKS1. Requires Zn(2+) as cofactor.

It localises to the cytoplasm. The catalysed reaction is Hydrolysis of an N(4)-(acetyl-beta-D-glucosaminyl)asparagine residue in which the glucosamine residue may be further glycosylated, to yield a (substituted) N-acetyl-beta-D-glucosaminylamine and a peptide containing an aspartate residue.. With respect to regulation, inhibited by Z-VAD-fmk, a well-known caspase inhibitor, which inhibits enzyme activity through covalent binding of the carbohydrate to the single Cys-306 residue. Specifically deglycosylates the denatured form of N-linked glycoproteins in the cytoplasm and assists their proteasome-mediated degradation. Cleaves the beta-aspartyl-glucosamine (GlcNAc) of the glycan and the amide side chain of Asn, converting Asn to Asp. Prefers proteins containing high-mannose over those bearing complex type oligosaccharides. Can recognize misfolded proteins in the endoplasmic reticulum that are exported to the cytosol to be destroyed and deglycosylate them, while it has no activity toward native proteins. Deglycosylation is a prerequisite for subsequent proteasome-mediated degradation of some, but not all, misfolded glycoproteins. This Rattus norvegicus (Rat) protein is Peptide-N(4)-(N-acetyl-beta-glucosaminyl)asparagine amidase (Ngly1).